A 237-amino-acid polypeptide reads, in one-letter code: Terpene cyclase spyD (237 aa).

7 consecutive transmembrane segments (helical) span residues 17–37, 47–67, 71–91, 109–129, 138–158, 167–187, and 206–226; these read IYNV…IVTV, AIPL…VLVY, YLLF…IVYG, HLPL…YALA, IHGG…CQLL, SWTM…GEFL, and WCTG…WYMG.

The protein belongs to the paxB family.

The protein localises to the membrane. The enzyme catalyses (S)-(2E,6E,10E)-epoxygeranylgeranyl-triacetate lactone = sartorypyrone F. It carries out the reaction (S)-(2E,6E,10E)-epoxygeranylgeranyl-triacetate lactone = sartorypyrone D. Its pathway is secondary metabolite biosynthesis; terpenoid biosynthesis. Terpene cyclase; part of the gene cluster that mediates the biosynthesis of meroterpenoids called sartorypyrones. Within the pathway, spyD catalyzes the cyclization of epoxygeranylgeranyl-triacetate lactone. SpyD exhibits promiscuous activity, resulting in the formation of bicyclic sartorypyrone F and monocyclic sartorypyrone D. The biosynthesis of sartorypyrones begins with the production of triacetic acid lactone (TAL) by the NR-PKS spyA using one molecule of acetyl-CoA and two molecules of malonyl-CoA. The prenyltransferase spyF then conjugates geranylgeranyl pyrophosphate (GGPP) to TAL to form geranylgeranyl-triacetate lactone, for which the pathway-specific geranylgeranyl pyrophosphate synthase (GGPS) spyE is required to provide GGPP. Subsequently, geranylgeranyl-triacetate lactone is epoxidized at the terminal olein by the FAD-dependent monooxygenase spyC, followed by cyclization of the terpenoid component catalyzed by the terpene cyclase spyD to produce both the bicyclic sartorypyrone F and the monocyclic sartorypyrone D. Finally, the last step of the biosynthesis involves the acetylation of the meroterpenoids sartorypyrones D and F by the acetyltransferase SpyB to produce sartorypyrones A and G, respectively. This is Terpene cyclase spyD from Aspergillus fumigatus (strain ATCC MYA-4609 / CBS 101355 / FGSC A1100 / Af293) (Neosartorya fumigata).